We begin with the raw amino-acid sequence, 208 residues long: MLWSFIAVCLSAWLSVDASYRGPTWQRWVFKPLTLLLLLLLAWQAPMFDAISYLVLAGLCASLLGDALTLLPRQRLMYAIGAFFLSHLLYTIYFASQMTLSFFWPLPLVLLVLGALLLAIIWTRLEEYRWPICTFIGMTLVMVWLAGELWFFRPTAPALSAFVGASLLFISNFVWLGSHYRRRFRADNAIAAACYFAGHFLIVRSLYL.

The next 6 membrane-spanning stretches (helical) occupy residues 35–55, 76–96, 102–122, 132–152, 156–176, and 188–208; these read LLLL…SYLV, LMYA…YFAS, FFWP…AIIW, ICTF…LWFF, APAL…FVWL, and NAIA…SLYL.

Belongs to the TMEM86 family.

It is found in the cell membrane. This is an uncharacterized protein from Escherichia coli O157:H7.